A 342-amino-acid chain; its full sequence is Phenylalanine--tRNA ligase alpha subunit (342 aa).

Mg(2+) is bound at residue Glu260.

This sequence belongs to the class-II aminoacyl-tRNA synthetase family. Phe-tRNA synthetase alpha subunit type 1 subfamily. As to quaternary structure, tetramer of two alpha and two beta subunits. The cofactor is Mg(2+).

Its subcellular location is the cytoplasm. The catalysed reaction is tRNA(Phe) + L-phenylalanine + ATP = L-phenylalanyl-tRNA(Phe) + AMP + diphosphate + H(+). This Mycobacterium avium (strain 104) protein is Phenylalanine--tRNA ligase alpha subunit.